The sequence spans 86 residues: Progonadoliberin IIA (86 aa).

A signal peptide spans M1–S24. A Pyrrolidone carboxylic acid modification is found at Q25. G34 bears the Glycine amide mark.

It belongs to the GnRH family. Olfactory bulbs, hypothalamus and telencephalon, midbrain and posterior brain areas.

The protein resides in the secreted. Stimulates the secretion of gonadotropins. This Carassius auratus (Goldfish) protein is Progonadoliberin IIA (gnrh2a).